The following is a 417-amino-acid chain: MFLQNILSVLAFALLIDAAPVKRSTGFVTLDFNVKRSLVDPKDPTVEVKRSPLFLDIEPTEIPVDDTGRNDVGKRGPVAVKLDNEIITYSADITIGSNNQKLSVIVDTGSSDLWVPDSNAVCIPKWPGDRGDFCKNNGSYSPAASSTSKNLNTPFEIKYADGSVAQGNLYQDTVGIGGVSVRDQLFANVRSTSAHKGILGIGFQSNEATRTPYDNLPITLKKQGIISKNAYSLFLNSPEASSGQIIFGGIDKAKYSGSLVDLPITSDRTLSVGLRSVNVMGQNVNVNAGVLLDSGTTISYFTPNIARSIIYALGGQVHYDSSGNEAYVADCKTSGTVDFQFDRNLKISVPASEFLYQLYYTNGEPYPKCEIRVRESEDNILGDNFMRSAYIVYDLDDRKISMAQVKYTSQSNIVAIN.

The signal sequence occupies residues 1 to 18 (MFLQNILSVLAFALLIDA). Residues 19–75 (APVKRSTGFVTLDFNVKRSLVDPKDPTVEVKRSPLFLDIEPTEIPVDDTGRNDVGKR) constitute a propeptide, activation peptide. One can recognise a Peptidase A1 domain in the interval 89–403 (YSADITIGSN…DLDDRKISMA (315 aa)). Asp-107 is an active-site residue. Residue 107–109 (DTG) participates in pepstatin A binding. Cysteines 122 and 134 form a disulfide. An N-linked (GlcNAc...) asparagine glycan is attached at Asn-137. 160 to 161 (AD) serves as a coordination point for pepstatin A. Asp-267 is a Zn(2+) binding site. Asp-293 is an active-site residue. 293–297 (DSGTT) contacts pepstatin A. Cys-331 and Cys-369 form a disulfide bridge.

Belongs to the peptidase A1 family. Monomer.

Its subcellular location is the secreted. It carries out the reaction Preferential cleavage at the carboxyl of hydrophobic amino acids, but fails to cleave 15-Leu-|-Tyr-16, 16-Tyr-|-Leu-17 and 24-Phe-|-Phe-25 of insulin B chain. Activates trypsinogen, and degrades keratin.. Its activity is regulated as follows. Activity is inhibited by squash aspartic peptidase inhibitor (SQAPI). Functionally, secreted aspartic peptidases (SAPs) are a group of ten acidic hydrolases considered as key virulence factors. These enzymes supply the fungus with nutrient amino acids as well as are able to degrade the selected host's proteins involved in the immune defense. Moreover, acts toward human hemoglobin though limited proteolysis to generate a variety of antimicrobial hemocidins, enabling to compete with the other microorganisms of the same physiological niche using the microbicidal peptides generated from the host protein. Its function is as follows. Plays a key role in defense against host by cleaving histatin-5 (Hst 5), a peptide from human saliva that carries out fungicidal activity. The cleavage rate decreases in an order of SAP2 &gt; SAP9 &gt; SAP3 &gt; SAP7 &gt; SAP4 &gt; SAP1 &gt; SAP8. The first cleavage occurs between residues 'Lys-17' and 'His-18' of Hst 5, giving DSHAKRHHGYKRKFHEK and HHSHRGY peptides. Simultaneously, the DSHAKRHHGY and KRKFHEKHHSHRGY peptides are also formed. This Candida albicans (strain SC5314 / ATCC MYA-2876) (Yeast) protein is Secreted aspartic protease 4.